A 137-amino-acid chain; its full sequence is Small ribosomal subunit protein uS12 (137 aa).

Residues 1-57 are disordered; it reads MPTINQLVRKPRRAQVTKSKSPAMNVGYNSRKKVQTKLASPQKRGVATRVGTMTPKK. Position 102 is a 3-methylthioaspartic acid (aspartate 102).

It belongs to the universal ribosomal protein uS12 family. Part of the 30S ribosomal subunit. Contacts proteins S8 and S17. May interact with IF1 in the 30S initiation complex.

In terms of biological role, with S4 and S5 plays an important role in translational accuracy. Interacts with and stabilizes bases of the 16S rRNA that are involved in tRNA selection in the A site and with the mRNA backbone. Located at the interface of the 30S and 50S subunits, it traverses the body of the 30S subunit contacting proteins on the other side and probably holding the rRNA structure together. The combined cluster of proteins S8, S12 and S17 appears to hold together the shoulder and platform of the 30S subunit. The polypeptide is Small ribosomal subunit protein uS12 (Lactococcus lactis subsp. lactis (strain IL1403) (Streptococcus lactis)).